The chain runs to 105 residues: N(4)-acetylcytidine amidohydrolase (105 aa).

One can recognise an ASCH domain in the interval 7–93; that stretch reads TFFERFEHDI…VIAEIYPGLE (87 aa). The active-site Proton acceptor is Lys-21. Thr-24 functions as the Nucleophile in the catalytic mechanism. Glu-74 serves as the catalytic Proton donor.

It belongs to the N(4)-acetylcytidine amidohydrolase family.

It catalyses the reaction N(4)-acetylcytidine + H2O = cytidine + acetate + H(+). The enzyme catalyses N(4)-acetyl-2'-deoxycytidine + H2O = 2'-deoxycytidine + acetate + H(+). It carries out the reaction N(4)-acetylcytosine + H2O = cytosine + acetate + H(+). Its function is as follows. Catalyzes the hydrolysis of N(4)-acetylcytidine (ac4C). The chain is N(4)-acetylcytidine amidohydrolase from Shewanella baltica (strain OS185).